The chain runs to 352 residues: MKKIVFTGGGTVGHVTLNLLLMPKFIEDGWEVHYIGDKCGIEHQEILKSGLDVTFHSIATGKLRRYFSWQNMLDVFKVGWGIVQSLFIMLRLRPQTLFSKGGFVSVPPVIAARVSGVPVFIHESDLSMGLANKIAYKFATKMYSTFEQASSLAKVEHVGAVTKVSDKNTPEPDELVDIQTHFNPKLPTVLFVGGSAGARVFNQLVTDHKKELTERYNIINLTGDSSLNELRQNLFRVDYVTDLYQPLMELADIVVTRGGANTIFELLAIAKLHVIVPLGREASRGDQIENAAYFVKKGYAEDLQESDLTLDSLEEKLSHLLSHKEDYQAKMKASKELKSLADFYQLLKKDLS.

UDP-N-acetyl-alpha-D-glucosamine contacts are provided by serine 195 and glutamine 287.

Belongs to the glycosyltransferase 28 family. MurG subfamily.

The protein resides in the cell membrane. The catalysed reaction is Mur2Ac(oyl-L-Ala-gamma-D-Glu-L-Lys-D-Ala-D-Ala)-di-trans,octa-cis-undecaprenyl diphosphate + UDP-N-acetyl-alpha-D-glucosamine = beta-D-GlcNAc-(1-&gt;4)-Mur2Ac(oyl-L-Ala-gamma-D-Glu-L-Lys-D-Ala-D-Ala)-di-trans,octa-cis-undecaprenyl diphosphate + UDP + H(+). Its pathway is cell wall biogenesis; peptidoglycan biosynthesis. Its function is as follows. Cell wall formation. Catalyzes the transfer of a GlcNAc subunit on undecaprenyl-pyrophosphoryl-MurNAc-pentapeptide (lipid intermediate I) to form undecaprenyl-pyrophosphoryl-MurNAc-(pentapeptide)GlcNAc (lipid intermediate II). The protein is UDP-N-acetylglucosamine--N-acetylmuramyl-(pentapeptide) pyrophosphoryl-undecaprenol N-acetylglucosamine transferase of Streptococcus pneumoniae serotype 4 (strain ATCC BAA-334 / TIGR4).